Reading from the N-terminus, the 208-residue chain is Uracil phosphoribosyltransferase (208 aa).

Residues Arg78, Arg103, and Asp130–Ser138 contribute to the 5-phospho-alpha-D-ribose 1-diphosphate site. Residues Ile193 and Gly198 to Ala200 contribute to the uracil site. Asp199 contributes to the 5-phospho-alpha-D-ribose 1-diphosphate binding site.

This sequence belongs to the UPRTase family. Requires Mg(2+) as cofactor.

It carries out the reaction UMP + diphosphate = 5-phospho-alpha-D-ribose 1-diphosphate + uracil. It functions in the pathway pyrimidine metabolism; UMP biosynthesis via salvage pathway; UMP from uracil: step 1/1. Allosterically activated by GTP. In terms of biological role, catalyzes the conversion of uracil and 5-phospho-alpha-D-ribose 1-diphosphate (PRPP) to UMP and diphosphate. This Aeromonas salmonicida (strain A449) protein is Uracil phosphoribosyltransferase.